The chain runs to 165 residues: Phosphopantetheine adenylyltransferase (165 aa).

The protein belongs to the eukaryotic CoaD family.

The protein localises to the cytoplasm. It carries out the reaction (R)-4'-phosphopantetheine + ATP + H(+) = 3'-dephospho-CoA + diphosphate. It participates in cofactor biosynthesis; coenzyme A biosynthesis. Functionally, reversibly transfers an adenylyl group from ATP to 4'-phosphopantetheine, yielding dephospho-CoA (dPCoA) and pyrophosphate. The sequence is that of Phosphopantetheine adenylyltransferase from Thermococcus kodakarensis (strain ATCC BAA-918 / JCM 12380 / KOD1) (Pyrococcus kodakaraensis (strain KOD1)).